A 502-amino-acid chain; its full sequence is T-complex protein 11-like X-linked protein 2 (502 aa).

The disordered stretch occupies residues 1–36 (MPKTEETVLQNDPSVAENGAPEPKTPGQSQKSKSFC).

The protein belongs to the TCP11 family.

This is T-complex protein 11-like X-linked protein 2 from Homo sapiens (Human).